Reading from the N-terminus, the 72-residue chain is DNA-directed RNA polymerase subunit omega (72 aa).

It belongs to the RNA polymerase subunit omega family. As to quaternary structure, the RNAP catalytic core consists of 2 alpha, 1 beta, 1 beta' and 1 omega subunit. When a sigma factor is associated with the core the holoenzyme is formed, which can initiate transcription.

The catalysed reaction is RNA(n) + a ribonucleoside 5'-triphosphate = RNA(n+1) + diphosphate. Functionally, promotes RNA polymerase assembly. Latches the N- and C-terminal regions of the beta' subunit thereby facilitating its interaction with the beta and alpha subunits. The sequence is that of DNA-directed RNA polymerase subunit omega from Francisella philomiragia subsp. philomiragia (strain ATCC 25017 / CCUG 19701 / FSC 153 / O#319-036).